A 114-amino-acid chain; its full sequence is Amphinase-2 (114 aa).

His15 (proton acceptor) is an active-site residue. Intrachain disulfides connect Cys26/Cys79, Cys41/Cys85, Cys59/Cys100, and Cys97/Cys114. The N-linked (GlcNAc...) asparagine glycan is linked to Asn27. 42-46 (KPINT) is a binding site for substrate. N-linked (GlcNAc...) asparagine glycosylation is found at Asn67 and Asn91. His107 (proton donor) is an active-site residue.

This sequence belongs to the pancreatic ribonuclease family. As to quaternary structure, monomer. In terms of processing, there are at least four different forms arising from glycan heterogeneity.

Its subcellular location is the secreted. Functionally, endonuclease, hydrolyzes highly polymerized RNA, poly(U) and poly(C), and the dinucleotides CpA and UpA. Hydrolyzes 18S and 28S ribosomal RNA. More active towards rCA than rUA or rUG. Has cytotoxic activity against cultured human submaxillary gland carcinoma cells. This chain is Amphinase-2, found in Lithobates pipiens (Northern leopard frog).